The sequence spans 350 residues: Geranylgeranyl pyrophosphate synthase (350 aa).

Lys-66, Arg-69, and His-98 together coordinate isopentenyl diphosphate. Residues Asp-105 and Asp-109 each contribute to the Mg(2+) site. Arg-114 serves as a coordination point for dimethylallyl diphosphate. An isopentenyl diphosphate-binding site is contributed by Arg-115. Dimethylallyl diphosphate-binding residues include Lys-200, Thr-201, Gln-236, Asn-243, and Lys-263.

The protein belongs to the FPP/GGPP synthase family. It depends on Mg(2+) as a cofactor.

The enzyme catalyses isopentenyl diphosphate + dimethylallyl diphosphate = (2E)-geranyl diphosphate + diphosphate. It catalyses the reaction isopentenyl diphosphate + (2E)-geranyl diphosphate = (2E,6E)-farnesyl diphosphate + diphosphate. The catalysed reaction is isopentenyl diphosphate + (2E,6E)-farnesyl diphosphate = (2E,6E,10E)-geranylgeranyl diphosphate + diphosphate. The protein operates within secondary metabolite biosynthesis; terpenoid biosynthesis. Functionally, geranylgeranyl pyrophosphate synthase; part of the gene cluster that mediates the biosynthesis of pleuromutilin, a tricyclic diterpene showing antibacterial properties. The geranylgeranyl diphosphate (GGPP) synthase ple4 catalyzes the first step in pleuromutilin biosynthesis. GGPP is then substrate of the premutilin synthase (PS) ple3 to yield premutilin. Premutilin synthase is a bifunctional enzyme composed of the fusion of a class II diterpene cyclase (DTC) and a class I diterpene synthase (DTS), with the corresponding domains and active sites containing characteristic aspartate-rich motifs. GGPP is first converted to mutildienyl-diphosphate (MPP) at the class II DTC site. MPP is subsequently further cyclized at the class I DTS site, followed by a 1,5-hydride shift and addition of water prior to terminating deprotonation, to yield premutilin. The cytochrome P450 monooxygenases ple5 and ple6 hydroxylate premutilin at C-11 and C-3, respectively, producing 11-hydroxypremutilin and 3-hydroxypremutilin. The combination of the actions of both ple5 and ple6 leads to the production of 3,11-dihydroxypremutilin. The short chain dehydrogenase ple7 further converts 3,11-dihydroxypremutilin into mutilin. The acetyltransferase ple2 then acetylates mutilin to produce 14-O-acetylmutilin. Finally, the cytochrome P450 monooxygenase ple1 catalyzes hydroxylation on the alpha position of the acetyl side chain of 14-O-acetylmutilin to yield pleuromutilin. This is Geranylgeranyl pyrophosphate synthase from Rhodocybe pseudopiperita (Clitopilus pseudopiperitus).